A 271-amino-acid chain; its full sequence is Phosphatidylinositol transfer protein alpha isoform (271 aa).

T59, K61, E86, N90, T97, and K195 together coordinate a 1,2-diacyl-sn-glycero-3-phospho-(1D-myo-inositol). The residue at position 216 (K216) is an N6-acetyllysine. Residues 251–264 show a composition bias toward basic and acidic residues; sequence TKRQLDEMRQKDPV. The interval 251 to 271 is disordered; that stretch reads TKRQLDEMRQKDPVKGMTADD.

This sequence belongs to the PtdIns transfer protein family. PI transfer class I subfamily. Phosphorylated by PKC in a calcium and phosphatidylserine-dependent manner. Expressed in a wide range of tissues.

The protein resides in the cytoplasm. The protein localises to the nucleus. The enzyme catalyses a 1,2-diacyl-sn-glycero-3-phosphocholine(in) = a 1,2-diacyl-sn-glycero-3-phosphocholine(out). It catalyses the reaction a 1,2-diacyl-sn-glycero-3-phospho-(1D-myo-inositol)(in) = a 1,2-diacyl-sn-glycero-3-phospho-(1D-myo-inositol)(out). Phosphatidylinositol transfer activity is inhibited by N-ethylmaleimide. In terms of biological role, catalyzes the transfer of phosphatidylinositol (PI) and phosphatidylcholine (PC) between membranes. Shows a preference for PI and PC containing shorter saturated or monosaturated acyl chains at the sn-1 and sn-2 positions. Preference order for PC is C16:1 &gt; C16:0 &gt; C18:1 &gt; C18:0 &gt; C20:4 and for PI is C16:1 &gt; C16:0 &gt; C18:1 &gt; C18:0 &gt; C20:4 &gt; C20:3. The sequence is that of Phosphatidylinositol transfer protein alpha isoform (Pitpna) from Rattus norvegicus (Rat).